The chain runs to 127 residues: MSITKEQVVEFIGNMTVLELSEFIKELEEKFGVSAAAPMAAMAVAAPAGDAAPAEEEKTEFDIILKSAGANKIGVIKVVRALTGLGLKEAKDKVDGAPSTLKEAASKEEAEEAKKQLVEAGAEVEIK.

The segment at 94 to 114 is disordered; the sequence is VDGAPSTLKEAASKEEAEEAK. Over residues 104 to 114 the composition is skewed to basic and acidic residues; that stretch reads AASKEEAEEAK.

It belongs to the bacterial ribosomal protein bL12 family. As to quaternary structure, homodimer. Part of the ribosomal stalk of the 50S ribosomal subunit. Forms a multimeric L10(L12)X complex, where L10 forms an elongated spine to which 2 to 4 L12 dimers bind in a sequential fashion. Binds GTP-bound translation factors.

In terms of biological role, forms part of the ribosomal stalk which helps the ribosome interact with GTP-bound translation factors. Is thus essential for accurate translation. In Nitratidesulfovibrio vulgaris (strain ATCC 29579 / DSM 644 / CCUG 34227 / NCIMB 8303 / VKM B-1760 / Hildenborough) (Desulfovibrio vulgaris), this protein is Large ribosomal subunit protein bL12.